The following is a 125-amino-acid chain: Holo-[acyl-carrier-protein] synthase (125 aa).

Positions 8 and 57 each coordinate Mg(2+).

This sequence belongs to the P-Pant transferase superfamily. AcpS family. The cofactor is Mg(2+).

The protein localises to the cytoplasm. The catalysed reaction is apo-[ACP] + CoA = holo-[ACP] + adenosine 3',5'-bisphosphate + H(+). Transfers the 4'-phosphopantetheine moiety from coenzyme A to a Ser of acyl-carrier-protein. The chain is Holo-[acyl-carrier-protein] synthase from Neisseria gonorrhoeae (strain ATCC 700825 / FA 1090).